The sequence spans 350 residues: S-adenosylmethionine:tRNA ribosyltransferase-isomerase (350 aa).

It belongs to the QueA family. In terms of assembly, monomer.

It is found in the cytoplasm. It catalyses the reaction 7-aminomethyl-7-carbaguanosine(34) in tRNA + S-adenosyl-L-methionine = epoxyqueuosine(34) in tRNA + adenine + L-methionine + 2 H(+). It functions in the pathway tRNA modification; tRNA-queuosine biosynthesis. Transfers and isomerizes the ribose moiety from AdoMet to the 7-aminomethyl group of 7-deazaguanine (preQ1-tRNA) to give epoxyqueuosine (oQ-tRNA). In Aliivibrio fischeri (strain MJ11) (Vibrio fischeri), this protein is S-adenosylmethionine:tRNA ribosyltransferase-isomerase.